The primary structure comprises 229 residues: Nectarin-1 (229 aa).

Residues 1–32 (MAAFGINSKIFQSMEMAILFLLAISIDRYCFA) form the signal peptide. A disulfide bridge links cysteine 42 with cysteine 57. N-linked (GlcNAc...) asparagine glycosylation is present at asparagine 60. Residues 69 to 217 (LAISKPGATN…TFQINTEDVQ (149 aa)) form the Cupin type-1 domain. Positions 117, 119, 124, and 163 each coordinate Mn(2+).

In terms of assembly, monomer. In the absence of manganese, it forms tetrameric and pentameric forms which show superoxide dismutase activity. Mn(2+) is required as a cofactor. Nectary tissues and to a lower level ovary. Not detected in petals, stems, leaves, roots or other floral tissues.

The protein localises to the secreted. The protein resides in the extracellular space. It localises to the apoplast. It carries out the reaction 2 superoxide + 2 H(+) = H2O2 + O2. In terms of biological role, may interact with bacterial adhesins thereby protecting the reproductive tissues from microbial attack. Has no oxalate oxidase activity. This Nicotiana langsdorffii x Nicotiana sanderae (Ornamental tobacco) protein is Nectarin-1 (NECI).